A 205-amino-acid polypeptide reads, in one-letter code: CASP-like protein 0U1 (205 aa).

At methionine 1–phenylalanine 66 the chain is on the cytoplasmic side. Residues alanine 10 to arginine 162 form the MARVEL domain. The chain crosses the membrane as a helical span at residues leucine 67–isoleucine 87. The Extracellular portion of the chain corresponds to glutamine 88–valine 90. The chain crosses the membrane as a helical span at residues proline 91–phenylalanine 111. Over serine 112 to lysine 137 the chain is Cytoplasmic. The helical transmembrane segment at alanine 138–tryptophan 158 threads the bilayer. Over lysine 159–glutamate 167 the chain is Extracellular. A helical transmembrane segment spans residues glycine 168–glycine 188. Over glycine 189–alanine 205 the chain is Cytoplasmic.

It belongs to the Casparian strip membrane proteins (CASP) family. Homodimer and heterodimers.

It localises to the cell membrane. This is CASP-like protein 0U1 from Micromonas pusilla (strain CCMP1545) (Picoplanktonic green alga).